The following is a 420-amino-acid chain: Gamma-glutamyl phosphate reductase (420 aa).

Belongs to the gamma-glutamyl phosphate reductase family.

The protein resides in the cytoplasm. The enzyme catalyses L-glutamate 5-semialdehyde + phosphate + NADP(+) = L-glutamyl 5-phosphate + NADPH + H(+). Its pathway is amino-acid biosynthesis; L-proline biosynthesis; L-glutamate 5-semialdehyde from L-glutamate: step 2/2. In terms of biological role, catalyzes the NADPH-dependent reduction of L-glutamate 5-phosphate into L-glutamate 5-semialdehyde and phosphate. The product spontaneously undergoes cyclization to form 1-pyrroline-5-carboxylate. The polypeptide is Gamma-glutamyl phosphate reductase (Oenococcus oeni (strain ATCC BAA-331 / PSU-1)).